A 129-amino-acid chain; its full sequence is Large ribosomal subunit protein bL21 (129 aa).

It belongs to the bacterial ribosomal protein bL21 family. Part of the 50S ribosomal subunit. Contacts protein L20.

Its function is as follows. This protein binds to 23S rRNA in the presence of protein L20. The protein is Large ribosomal subunit protein bL21 of Microcystis aeruginosa (strain NIES-843 / IAM M-2473).